Consider the following 170-residue polypeptide: Sec-independent protein translocase protein TatB (170 aa).

A helical membrane pass occupies residues 1–21 (MIDFGFDKIALIGAVALIVIG). A disordered region spans residues 69–170 (AARNVEQSVS…VARFRPPRPL (102 aa)). Residues 73 to 93 (VEQSVSSEVNRTSSEMNQAWE) show a composition bias toward polar residues. Residues 128–137 (HPRKNWRLKR) show a composition bias toward basic residues.

The protein belongs to the TatB family. In terms of assembly, the Tat system comprises two distinct complexes: a TatABC complex, containing multiple copies of TatA, TatB and TatC subunits, and a separate TatA complex, containing only TatA subunits. Substrates initially bind to the TatABC complex, which probably triggers association of the separate TatA complex to form the active translocon.

It is found in the cell inner membrane. In terms of biological role, part of the twin-arginine translocation (Tat) system that transports large folded proteins containing a characteristic twin-arginine motif in their signal peptide across membranes. Together with TatC, TatB is part of a receptor directly interacting with Tat signal peptides. TatB may form an oligomeric binding site that transiently accommodates folded Tat precursor proteins before their translocation. This chain is Sec-independent protein translocase protein TatB, found in Methylibium petroleiphilum (strain ATCC BAA-1232 / LMG 22953 / PM1).